A 479-amino-acid chain; its full sequence is Glutamate--tRNA ligase (479 aa).

The short motif at 9–19 is the 'HIGH' region element; that stretch reads PSPTGLFHIGT. The 'KMSKS' region motif lies at 248–252; it reads KLSKR. Position 251 (K251) interacts with ATP.

This sequence belongs to the class-I aminoacyl-tRNA synthetase family. Glutamate--tRNA ligase type 1 subfamily. Monomer.

It localises to the cytoplasm. It catalyses the reaction tRNA(Glu) + L-glutamate + ATP = L-glutamyl-tRNA(Glu) + AMP + diphosphate. Catalyzes the attachment of glutamate to tRNA(Glu) in a two-step reaction: glutamate is first activated by ATP to form Glu-AMP and then transferred to the acceptor end of tRNA(Glu). The chain is Glutamate--tRNA ligase from Prochlorococcus marinus (strain MIT 9215).